Here is a 179-residue protein sequence, read N- to C-terminus: Large ribosomal subunit protein uL5 (179 aa).

Belongs to the universal ribosomal protein uL5 family. In terms of assembly, part of the 50S ribosomal subunit; part of the 5S rRNA/L5/L18/L25 subcomplex. Contacts the 5S rRNA and the P site tRNA. Forms a bridge to the 30S subunit in the 70S ribosome.

In terms of biological role, this is one of the proteins that bind and probably mediate the attachment of the 5S RNA into the large ribosomal subunit, where it forms part of the central protuberance. In the 70S ribosome it contacts protein S13 of the 30S subunit (bridge B1b), connecting the 2 subunits; this bridge is implicated in subunit movement. Contacts the P site tRNA; the 5S rRNA and some of its associated proteins might help stabilize positioning of ribosome-bound tRNAs. The chain is Large ribosomal subunit protein uL5 from Exiguobacterium sp. (strain ATCC BAA-1283 / AT1b).